Consider the following 143-residue polypeptide: uncharacterized protein (143 aa).

Residues 24–78 (IRQRREWQNMSQTTLGEAIGVTFQQVQKYEKGVNRVGAGRLQQISKALKVEPSYF) form the HTH cro/C1-type domain. The segment at residues 35–54 (QTTLGEAIGVTFQQVQKYEK) is a DNA-binding region (H-T-H motif).

This is an uncharacterized protein from Sinorhizobium fredii (strain NBRC 101917 / NGR234).